Here is a 35-residue protein sequence, read N- to C-terminus: Putative gene 58 protein (35 aa).

The polypeptide is Putative gene 58 protein (58) (Bacillus phage SP01 (Bacteriophage SP01)).